The primary structure comprises 374 residues: tRNA-specific 2-thiouridylase MnmA (374 aa).

ATP is bound by residues 12–19 and M38; that span reads GMSGGVDS. The tract at residues 98 to 100 is interaction with target base in tRNA; that stretch reads NPD. C103 functions as the Nucleophile in the catalytic mechanism. C103 and C207 form a disulfide bridge. G128 contributes to the ATP binding site. The segment at 157–159 is interaction with tRNA; the sequence is KDQ. C207 (cysteine persulfide intermediate) is an active-site residue. The interaction with tRNA stretch occupies residues 321–322; that stretch reads RY.

Belongs to the MnmA/TRMU family.

The protein localises to the cytoplasm. The enzyme catalyses S-sulfanyl-L-cysteinyl-[protein] + uridine(34) in tRNA + AH2 + ATP = 2-thiouridine(34) in tRNA + L-cysteinyl-[protein] + A + AMP + diphosphate + H(+). Its function is as follows. Catalyzes the 2-thiolation of uridine at the wobble position (U34) of tRNA, leading to the formation of s(2)U34. The chain is tRNA-specific 2-thiouridylase MnmA from Aliivibrio fischeri (strain MJ11) (Vibrio fischeri).